Consider the following 1279-residue polypeptide: ATP-dependent helicase/nuclease subunit A (1279 aa).

The UvrD-like helicase ATP-binding domain occupies 4–499; that stretch reads TKWTDEQRQA…VKLFKNFRSR (496 aa). Residue 25–32 coordinates ATP; it reads AGAGAGKT. A UvrD-like helicase C-terminal domain is found at 526–853; that stretch reads EEALKVGASY…RIMSIHKSKG (328 aa).

This sequence belongs to the helicase family. AddA subfamily. As to quaternary structure, heterodimer of AddA and AddB/RexB. It depends on Mg(2+) as a cofactor.

It catalyses the reaction Couples ATP hydrolysis with the unwinding of duplex DNA by translocating in the 3'-5' direction.. The enzyme catalyses ATP + H2O = ADP + phosphate + H(+). In terms of biological role, the heterodimer acts as both an ATP-dependent DNA helicase and an ATP-dependent, dual-direction single-stranded exonuclease. Recognizes the chi site generating a DNA molecule suitable for the initiation of homologous recombination. The AddA nuclease domain is required for chi fragment generation; this subunit has the helicase and 3' -&gt; 5' nuclease activities. The polypeptide is ATP-dependent helicase/nuclease subunit A (Clostridium botulinum (strain Langeland / NCTC 10281 / Type F)).